A 689-amino-acid polypeptide reads, in one-letter code: DNA polymerase epsilon subunit B (689 aa).

The span at 98–115 (EWSHEHPIQHEENILGRT) shows a compositional bias: basic and acidic residues. The disordered stretch occupies residues 98 to 155 (EWSHEHPIQHEENILGRTDDDENNSDDEMPIAADSSLQNVSLSSPMRQPTERDEYKQP). The segment covering 116–126 (DDDENNSDDEM) has biased composition (acidic residues). The residue at position 122 (serine 122) is a Phosphoserine. Positions 132–144 (SSLQNVSLSSPMR) are enriched in polar residues. Serine 141 carries the post-translational modification Phosphoserine; by CDC28. Residues 146–155 (PTERDEYKQP) are compositionally biased toward basic and acidic residues. Serine 613 is subject to Phosphoserine.

It belongs to the DNA polymerase epsilon subunit B family. In terms of assembly, DNA polymerase epsilon is a heterotetramer consisting of POL2, DPB2, DPB3 and DPB4. Phosphorylated in a cell cycle dependent manner during late G1 phase. Phosphorylation may facilitate the interaction with POL2 or the activity of DNA polymerase II. Phosphorylation is independent of DNA replication but dependent upon CDC28 in vivo. Both Ser-141 and Ser-613 are phosphorylated in vivo, but in vitro only Ser-141 is phosphorylated by CDC28.

It is found in the cytoplasm. The protein resides in the nucleus. Functionally, as accessory component of the DNA polymerase epsilon complex participates in chromosomal DNA replication. It is required during synthesis of the leading and lagging DNA strands at the replication fork and binds at/or near replication origins and moves along DNA with the replication fork. It has 3'-5' proofreading exonuclease activity that correct errors arising during DNA replication. It is also involved in DNA synthesis during DNA repair. This is DNA polymerase epsilon subunit B (DPB2) from Saccharomyces cerevisiae (strain ATCC 204508 / S288c) (Baker's yeast).